Here is a 425-residue protein sequence, read N- to C-terminus: Tyrosine--tRNA ligase (425 aa).

Tyr-37 provides a ligand contact to L-tyrosine. Residues Pro-42–His-51 carry the 'HIGH' region motif. Tyr-175 and Gln-179 together coordinate L-tyrosine. The short motif at Lys-235 to Thr-239 is the 'KMSKS' region element. Lys-238 contacts ATP. Positions Gln-357–Lys-415 constitute an S4 RNA-binding domain.

It belongs to the class-I aminoacyl-tRNA synthetase family. TyrS type 1 subfamily. Homodimer.

It is found in the cytoplasm. The enzyme catalyses tRNA(Tyr) + L-tyrosine + ATP = L-tyrosyl-tRNA(Tyr) + AMP + diphosphate + H(+). Catalyzes the attachment of tyrosine to tRNA(Tyr) in a two-step reaction: tyrosine is first activated by ATP to form Tyr-AMP and then transferred to the acceptor end of tRNA(Tyr). The chain is Tyrosine--tRNA ligase from Erwinia tasmaniensis (strain DSM 17950 / CFBP 7177 / CIP 109463 / NCPPB 4357 / Et1/99).